The primary structure comprises 192 residues: Molybdenum cofactor guanylyltransferase (192 aa).

Residues lysine 21, aspartate 67, and aspartate 101 each contribute to the GTP site. A Mg(2+)-binding site is contributed by aspartate 101.

This sequence belongs to the MobA family. As to quaternary structure, monomer. Mg(2+) serves as cofactor.

It localises to the cytoplasm. The catalysed reaction is Mo-molybdopterin + GTP + H(+) = Mo-molybdopterin guanine dinucleotide + diphosphate. Functionally, transfers a GMP moiety from GTP to Mo-molybdopterin (Mo-MPT) cofactor (Moco or molybdenum cofactor) to form Mo-molybdopterin guanine dinucleotide (Mo-MGD) cofactor. This Neisseria meningitidis serogroup C / serotype 2a (strain ATCC 700532 / DSM 15464 / FAM18) protein is Molybdenum cofactor guanylyltransferase.